Here is a 325-residue protein sequence, read N- to C-terminus: Holliday junction branch migration complex subunit RuvB (325 aa).

Positions 1–180 (MKNQLLDAKV…FGIHLKLNFY (180 aa)) are large ATPase domain (RuvB-L). Residues Leu-19, Arg-20, Gly-61, Lys-64, Thr-65, Ser-66, 127 to 129 (EDF), Arg-170, Tyr-180, and Arg-217 contribute to the ATP site. Thr-65 provides a ligand contact to Mg(2+). The segment at 181 to 251 (SCEELTQIVE…ITDYALNQLG (71 aa)) is small ATPAse domain (RuvB-S). A head domain (RuvB-H) region spans residues 254–325 (KLGLDSSDHK…ITANALKHLH (72 aa)). Residues Arg-290, Arg-309, and Arg-314 each coordinate DNA.

The protein belongs to the RuvB family. As to quaternary structure, homohexamer. Forms an RuvA(8)-RuvB(12)-Holliday junction (HJ) complex. HJ DNA is sandwiched between 2 RuvA tetramers; dsDNA enters through RuvA and exits via RuvB. An RuvB hexamer assembles on each DNA strand where it exits the tetramer. Each RuvB hexamer is contacted by two RuvA subunits (via domain III) on 2 adjacent RuvB subunits; this complex drives branch migration. In the full resolvosome a probable DNA-RuvA(4)-RuvB(12)-RuvC(2) complex forms which resolves the HJ.

Its subcellular location is the cytoplasm. It catalyses the reaction ATP + H2O = ADP + phosphate + H(+). Its function is as follows. The RuvA-RuvB-RuvC complex processes Holliday junction (HJ) DNA during genetic recombination and DNA repair, while the RuvA-RuvB complex plays an important role in the rescue of blocked DNA replication forks via replication fork reversal (RFR). RuvA specifically binds to HJ cruciform DNA, conferring on it an open structure. The RuvB hexamer acts as an ATP-dependent pump, pulling dsDNA into and through the RuvAB complex. RuvB forms 2 homohexamers on either side of HJ DNA bound by 1 or 2 RuvA tetramers; 4 subunits per hexamer contact DNA at a time. Coordinated motions by a converter formed by DNA-disengaged RuvB subunits stimulates ATP hydrolysis and nucleotide exchange. Immobilization of the converter enables RuvB to convert the ATP-contained energy into a lever motion, pulling 2 nucleotides of DNA out of the RuvA tetramer per ATP hydrolyzed, thus driving DNA branch migration. The RuvB motors rotate together with the DNA substrate, which together with the progressing nucleotide cycle form the mechanistic basis for DNA recombination by continuous HJ branch migration. Branch migration allows RuvC to scan DNA until it finds its consensus sequence, where it cleaves and resolves cruciform DNA. This Orientia tsutsugamushi (strain Boryong) (Rickettsia tsutsugamushi) protein is Holliday junction branch migration complex subunit RuvB.